The chain runs to 105 residues: Multidrug resistance protein EbrA (105 aa).

4 consecutive transmembrane segments (helical) span residues 2–22 (IAGY…AAML), 35–55 (VLVV…LQVI), 60–80 (SYAT…VLWF), and 87–104 (RNIA…LINL).

The protein belongs to the drug/metabolite transporter (DMT) superfamily. Small multidrug resistance (SMR) (TC 2.A.7.1) family. EbrA/EbrB subfamily. The efflux pump is composed of EbrA and EbrB.

Its subcellular location is the cell membrane. In terms of biological role, part of a multidrug efflux pump. Confers resistance to cationic lipophilic dyes such as ethidium bromide, acriflavine, pyronine Y and safranin O. The efflux is probably coupled to an influx of protons. This chain is Multidrug resistance protein EbrA (ebrA), found in Bacillus licheniformis (strain ATCC 14580 / DSM 13 / JCM 2505 / CCUG 7422 / NBRC 12200 / NCIMB 9375 / NCTC 10341 / NRRL NRS-1264 / Gibson 46).